Reading from the N-terminus, the 495-residue chain is UDP-glycosyltransferase 73C5 (495 aa).

The helical transmembrane segment at 146–162 (ILFHGMGCFCLLCMHVL) threads the bilayer. Residues S296, 356–358 (SPQ), 373–381 (HCGWNSTLE), and 395–398 (FADQ) each bind UDP-alpha-D-glucose. The interval 446-477 (MGESDDAKERRRRAKELGDSAHKAVEEGGSSH) is disordered. Over residues 450 to 471 (DDAKERRRRAKELGDSAHKAVE) the composition is skewed to basic and acidic residues.

It belongs to the UDP-glycosyltransferase family. As to expression, elongating hypocotyls and root-specific. Expressed in the vascular system, in meristematic tissues of the root tip, and in the vasculature of the hypocotyl right after germination. In late stage of flower development, expressed in petals, and in abscission zones.

The protein resides in the membrane. Functionally, specifically catalyzes 23-O-glucosylation of brassinosteroids, resulting probably in their inactivation. Also, involved in the O-glucosylation of trans-zeatin and dihydrozeatin. Active in vitro on cis-zeatin, dihydrozeatin-9-N-Glc, and olomoucine. Also involved in the detoxification of the Fusarium mycotoxin deoxynivalenol by the transfer of glucose from UDP-glucose to the hydroxyl group at C-3. Possesses low quercetin 7-O-glucosyltransferase and 4'-O-glucosyltransferase activities in vitro. This chain is UDP-glycosyltransferase 73C5 (UGT73C5), found in Arabidopsis thaliana (Mouse-ear cress).